A 300-amino-acid polypeptide reads, in one-letter code: Telomere repeat-binding factor 1 (300 aa).

Residues 1-58 enclose the HTH myb-type domain; the sequence is MGAPKQKWTQEEESALKSGVIKHGPGKWRTILKDPEFSGVLYLRSNVDLKDKWRNMSV. Residues 28–57 constitute a DNA-binding region (H-T-H motif); it reads WRTILKDPEFSGVLYLRSNVDLKDKWRNMS. Disordered regions lie at residues 93 to 119 and 185 to 213; these read LQSDEENVDATSGLQVSSNPPPRRPNV and NSTPLSSHRRKGLGVFGGKQRTSSLPSPK. The H15 domain maps to 117–185; it reads PNVRLDSLIM…KVKRKYRIPN (69 aa). Residues 241–290 are a coiled coil; it reads EAAAVAAQAVAEAEAAMAEAEEAAKEAEAAEAEAEAAQAFAEEASKTLKG.

Belongs to the histone H1/H5 family. SMH subfamily. In terms of assembly, forms a homodimer and heterodimers with TRB2 or TRB3. Interacts with POT1b, TRB2 and TRB3 through its H15 domain.

The protein resides in the nucleus. Its subcellular location is the nucleolus. The protein localises to the chromosome. Binds preferentially double-stranded telomeric repeats. The polypeptide is Telomere repeat-binding factor 1 (TRB1) (Arabidopsis thaliana (Mouse-ear cress)).